A 305-amino-acid polypeptide reads, in one-letter code: UDP-3-O-acyl-N-acetylglucosamine deacetylase (305 aa).

His-79, His-238, and Asp-242 together coordinate Zn(2+). His-265 serves as the catalytic Proton donor.

Belongs to the LpxC family. Zn(2+) is required as a cofactor.

The catalysed reaction is a UDP-3-O-[(3R)-3-hydroxyacyl]-N-acetyl-alpha-D-glucosamine + H2O = a UDP-3-O-[(3R)-3-hydroxyacyl]-alpha-D-glucosamine + acetate. The protein operates within glycolipid biosynthesis; lipid IV(A) biosynthesis; lipid IV(A) from (3R)-3-hydroxytetradecanoyl-[acyl-carrier-protein] and UDP-N-acetyl-alpha-D-glucosamine: step 2/6. Its function is as follows. Catalyzes the hydrolysis of UDP-3-O-myristoyl-N-acetylglucosamine to form UDP-3-O-myristoylglucosamine and acetate, the committed step in lipid A biosynthesis. The chain is UDP-3-O-acyl-N-acetylglucosamine deacetylase from Klebsiella pneumoniae (strain 342).